Reading from the N-terminus, the 318-residue chain is MLLTNILCLMMPILLAVAFLTLTERKILGHMQLRKGPNTVGPHGLLQPVADAVKLFTKEPLHPLTSSKLMFIIAPTLAFTLALSLWAPLPMPHPLINLNLSILFILAMSSLAVHSILWSGWASNSKYALIGALRAVAQTISYEVTLAIILLSIMLINGSFTLSTLTITQEQMWLILPTWPLAMMWFISTLAETNRTPFDLSEGESELVSGFNVEYAAGPFALFFMAEYTNIILMNALTATLFFGAFHNPLFPELHTINLTTKTLILVFLFLWIRASYPRFRYDQLMHLLWKNFLPLTLALCTWHMTMPISLAGIPPQT.

8 helical membrane passes run 2–22 (LLTN…FLTL), 69–89 (LMFI…WAPL), 102–122 (ILFI…SGWA), 147–167 (AIIL…TLTI), 172–192 (MWLI…TLAE), 231–251 (IILM…NPLF), 253–273 (ELHT…FLWI), and 294–314 (LPLT…LAGI).

The protein belongs to the complex I subunit 1 family.

The protein resides in the mitochondrion inner membrane. It carries out the reaction a ubiquinone + NADH + 5 H(+)(in) = a ubiquinol + NAD(+) + 4 H(+)(out). In terms of biological role, core subunit of the mitochondrial membrane respiratory chain NADH dehydrogenase (Complex I) that is believed to belong to the minimal assembly required for catalysis. Complex I functions in the transfer of electrons from NADH to the respiratory chain. The immediate electron acceptor for the enzyme is believed to be ubiquinone. The protein is NADH-ubiquinone oxidoreductase chain 1 (MT-ND1) of Bradypus variegatus (Brown-throated three-fingered sloth).